Reading from the N-terminus, the 162-residue chain is MVKIIGLDPGISKTGWAIISLNEKNNIEFLGGGTISTDGKLGTGERLHIIFEQLKKVISLYSPNEAAVEKIFVNKNPKSSLTLGYARGVVILALKITKLTMNEYDANYVKKSITGNGHADKDQIIFMVKQIVKNLNIKCHHAADALAVAICHAYTKGSCFVE.

Residues D8, E69, and H141 contribute to the active site. D8, E69, and H141 together coordinate Mg(2+).

The protein belongs to the RuvC family. As to quaternary structure, homodimer which binds Holliday junction (HJ) DNA. The HJ becomes 2-fold symmetrical on binding to RuvC with unstacked arms; it has a different conformation from HJ DNA in complex with RuvA. In the full resolvosome a probable DNA-RuvA(4)-RuvB(12)-RuvC(2) complex forms which resolves the HJ. Mg(2+) serves as cofactor.

The protein localises to the cytoplasm. It carries out the reaction Endonucleolytic cleavage at a junction such as a reciprocal single-stranded crossover between two homologous DNA duplexes (Holliday junction).. Functionally, the RuvA-RuvB-RuvC complex processes Holliday junction (HJ) DNA during genetic recombination and DNA repair. Endonuclease that resolves HJ intermediates. Cleaves cruciform DNA by making single-stranded nicks across the HJ at symmetrical positions within the homologous arms, yielding a 5'-phosphate and a 3'-hydroxyl group; requires a central core of homology in the junction. The consensus cleavage sequence is 5'-(A/T)TT(C/G)-3'. Cleavage occurs on the 3'-side of the TT dinucleotide at the point of strand exchange. HJ branch migration catalyzed by RuvA-RuvB allows RuvC to scan DNA until it finds its consensus sequence, where it cleaves and resolves the cruciform DNA. The protein is Crossover junction endodeoxyribonuclease RuvC of Wolbachia sp. subsp. Drosophila simulans (strain wRi).